The chain runs to 375 residues: N5-carboxyaminoimidazole ribonucleotide synthase (375 aa).

ATP is bound by residues Arg108, Lys148, 153–159, 183–186, Glu191, His214, and 266–267; these read GYDGKGQ, EQYL, and NE. The ATP-grasp domain occupies 112–296; the sequence is KQTLLEANTQ…QFDTHILAIT (185 aa).

It belongs to the PurK/PurT family. As to quaternary structure, homodimer.

It carries out the reaction 5-amino-1-(5-phospho-beta-D-ribosyl)imidazole + hydrogencarbonate + ATP = 5-carboxyamino-1-(5-phospho-D-ribosyl)imidazole + ADP + phosphate + 2 H(+). The protein operates within purine metabolism; IMP biosynthesis via de novo pathway; 5-amino-1-(5-phospho-D-ribosyl)imidazole-4-carboxylate from 5-amino-1-(5-phospho-D-ribosyl)imidazole (N5-CAIR route): step 1/2. Its function is as follows. Catalyzes the ATP-dependent conversion of 5-aminoimidazole ribonucleotide (AIR) and HCO(3)(-) to N5-carboxyaminoimidazole ribonucleotide (N5-CAIR). The sequence is that of N5-carboxyaminoimidazole ribonucleotide synthase from Staphylococcus epidermidis (strain ATCC 12228 / FDA PCI 1200).